Consider the following 53-residue polypeptide: UPF0391 membrane protein Bcep18194_C7021 (53 aa).

2 helical membrane passes run 5–25 and 30–50; these read AVIFFIIAIVAAVFGFGGIAA and IAKILFYIFVVIFLVTLLLGV.

The protein belongs to the UPF0391 family.

The protein localises to the cell membrane. The sequence is that of UPF0391 membrane protein Bcep18194_C7021 from Burkholderia lata (strain ATCC 17760 / DSM 23089 / LMG 22485 / NCIMB 9086 / R18194 / 383).